We begin with the raw amino-acid sequence, 450 residues long: Involucrin (450 aa).

Over residues 1–19 (MSQQHTLPVTLPPTLSQEL) the composition is skewed to polar residues. Disordered stretches follow at residues 1–43 (MSQQ…LPAP), 77–370 (QLQQ…EQLK), and 422–450 (PGQV…EPEV). Basic and acidic residues predominate over residues 86 to 108 (QEVHLAKHQELQELQEQELHLGK). Residues 120–135 (GKQQQQQESQEQELYL) show a composition bias toward low complexity. 2 stretches are compositionally biased toward basic and acidic residues: residues 187-200 (LGKR…ELHL) and 264-281 (QELH…ELHL). The segment covering 295 to 344 (GEAAAAGVTGAGPAASKAARRATGAGTAPGKAAAAAGATGAGTAATAPAT) has biased composition (low complexity). The segment covering 345–370 (AEERQKAESLEQQLEQEKAQREEQLK) has biased composition (basic and acidic residues).

It belongs to the involucrin family. In terms of assembly, directly or indirectly cross-linked to cornifelin (CNFN). Post-translationally, substrate of transglutaminase. Specific glutamines or lysines are cross-linked to keratins, desmoplakin and to inter involucrin molecules. As to expression, keratinocytes of epidermis and other stratified squamous epithelia.

Its subcellular location is the cytoplasm. In terms of biological role, part of the insoluble cornified cell envelope (CE) of stratified squamous epithelia. In Lemur catta (Ring-tailed lemur), this protein is Involucrin (IVL).